We begin with the raw amino-acid sequence, 551 residues long: Endolytic murein transglycosylase (551 aa).

The Cytoplasmic segment spans residues 1-187 (MSEKSREEEK…PKKEKKSHVK (187 aa)). The tract at residues 38–180 (VRTPANEPSA…EGAKPAKPKK (143 aa)) is disordered. 2 stretches are compositionally biased toward low complexity: residues 100–110 (PSSPAEESGSR) and 145–157 (QAGP…ATET). The segment covering 159–174 (DIIRDTSRRSRREGAK) has biased composition (basic and acidic residues). Residues 188-208 (AFVISFLVFLALLSAGGYFGY) form a helical membrane-spanning segment. The Extracellular segment spans residues 209–551 (QYVLDSLLPI…VAEHVNSKLN (343 aa)).

This sequence belongs to the transglycosylase MltG family.

It is found in the cell membrane. The catalysed reaction is a peptidoglycan chain = a peptidoglycan chain with N-acetyl-1,6-anhydromuramyl-[peptide] at the reducing end + a peptidoglycan chain with N-acetylglucosamine at the non-reducing end.. Functionally, functions as a peptidoglycan terminase that cleaves nascent peptidoglycan strands endolytically to terminate their elongation. Involved in peripheral peptidoglycan (PG) synthesis. This chain is Endolytic murein transglycosylase, found in Streptococcus pneumoniae serotype 2 (strain D39 / NCTC 7466).